The following is a 243-amino-acid chain: Small ribosomal subunit protein uS3 (243 aa).

Positions 39-110 (IRVFIQKKYG…QVRINVVEIE (72 aa)) constitute a KH type-2 domain. Residues 216-243 (QPLPVGASPRRKGNRRPQQFEDRSNDGK) form a disordered region. Positions 233 to 243 (QQFEDRSNDGK) are enriched in basic and acidic residues.

The protein belongs to the universal ribosomal protein uS3 family. As to quaternary structure, part of the 30S ribosomal subunit. Forms a tight complex with proteins S10 and S14.

Functionally, binds the lower part of the 30S subunit head. Binds mRNA in the 70S ribosome, positioning it for translation. This is Small ribosomal subunit protein uS3 from Prochlorococcus marinus (strain SARG / CCMP1375 / SS120).